A 278-amino-acid polypeptide reads, in one-letter code: 4-deoxy-L-threo-5-hexosulose-uronate ketol-isomerase (278 aa).

4 residues coordinate Zn(2+): histidine 196, histidine 198, glutamate 203, and histidine 245.

Belongs to the KduI family. Requires Zn(2+) as cofactor.

It catalyses the reaction 5-dehydro-4-deoxy-D-glucuronate = 3-deoxy-D-glycero-2,5-hexodiulosonate. It functions in the pathway glycan metabolism; pectin degradation; 2-dehydro-3-deoxy-D-gluconate from pectin: step 4/5. Functionally, catalyzes the isomerization of 5-dehydro-4-deoxy-D-glucuronate to 3-deoxy-D-glycero-2,5-hexodiulosonate. The chain is 4-deoxy-L-threo-5-hexosulose-uronate ketol-isomerase from Enterobacter sp. (strain 638).